We begin with the raw amino-acid sequence, 158 residues long: Transcriptional repressor NrdR (158 aa).

Residues 1–22 are disordered; the sequence is MRCPYCGSEDTQVKDSRPAEDN. A zinc finger lies at 3–34; the sequence is CPYCGSEDTQVKDSRPAEDNTSIRRRRICPDC. The segment covering 11 to 22 has biased composition (basic and acidic residues); that stretch reads TQVKDSRPAEDN. The ATP-cone domain maps to 49 to 139; it reads LMVIKKTGRK…VYRDFSHAED (91 aa).

This sequence belongs to the NrdR family. Zn(2+) serves as cofactor.

Its function is as follows. Negatively regulates transcription of bacterial ribonucleotide reductase nrd genes and operons by binding to NrdR-boxes. This Rhizobium rhizogenes (strain K84 / ATCC BAA-868) (Agrobacterium radiobacter) protein is Transcriptional repressor NrdR.